We begin with the raw amino-acid sequence, 273 residues long: Nitrogenase iron protein 5 (273 aa).

An ATP-binding site is contributed by 8–15; that stretch reads GKGGIGKS. Cysteine 94 is a binding site for [4Fe-4S] cluster. At arginine 97 the chain carries ADP-ribosylarginine; by dinitrogenase reductase ADP-ribosyltransferase. Residue cysteine 129 participates in [4Fe-4S] cluster binding.

Belongs to the NifH/BchL/ChlL family. Homodimer. The cofactor is [4Fe-4S] cluster. Post-translationally, the reversible ADP-ribosylation of Arg-97 inactivates the nitrogenase reductase and regulates nitrogenase activity.

It catalyses the reaction N2 + 8 reduced [2Fe-2S]-[ferredoxin] + 16 ATP + 16 H2O = H2 + 8 oxidized [2Fe-2S]-[ferredoxin] + 2 NH4(+) + 16 ADP + 16 phosphate + 6 H(+). The key enzymatic reactions in nitrogen fixation are catalyzed by the nitrogenase complex, which has 2 components: the iron protein and the molybdenum-iron protein. The sequence is that of Nitrogenase iron protein 5 (nifH5) from Clostridium pasteurianum.